The following is a 210-amino-acid chain: Probable GTP-binding protein EngB (210 aa).

The EngB-type G domain occupies glutamine 30–leucine 204. Residues glycine 38–serine 45, glycine 64–leucine 68, aspartate 82–glycine 85, threonine 149–aspartate 152, and leucine 182–alanine 185 each bind GTP. The Mg(2+) site is built by serine 45 and threonine 66.

The protein belongs to the TRAFAC class TrmE-Era-EngA-EngB-Septin-like GTPase superfamily. EngB GTPase family. It depends on Mg(2+) as a cofactor.

Functionally, necessary for normal cell division and for the maintenance of normal septation. The polypeptide is Probable GTP-binding protein EngB (Pseudomonas putida (strain ATCC 47054 / DSM 6125 / CFBP 8728 / NCIMB 11950 / KT2440)).